A 262-amino-acid polypeptide reads, in one-letter code: Sepiapterin reductase (262 aa).

At M1 the chain carries N-acetylmethionine. Residues 15–21 and 43–44 contribute to the NADP(+) site; these read GASRGFG and RS. A Phosphoserine modification is found at S46. 70 to 71 contacts NADP(+); the sequence is DL. Substrate-binding positions include 158–159 and Y171; that span reads SL. K175 is a binding site for NADP(+). S196 is subject to Phosphoserine. G200 is a binding site for substrate. 202 to 207 contacts NADP(+); it reads LDTDMQ. Position 214 is a phosphoserine (S214). D258 is a binding site for substrate.

Belongs to the sepiapterin reductase family. As to quaternary structure, homodimer.

Its subcellular location is the cytoplasm. It catalyses the reaction L-erythro-7,8-dihydrobiopterin + NADP(+) = L-sepiapterin + NADPH + H(+). The catalysed reaction is (6R)-L-erythro-5,6,7,8-tetrahydrobiopterin + 2 NADP(+) = 6-pyruvoyl-5,6,7,8-tetrahydropterin + 2 NADPH + 2 H(+). It carries out the reaction (S)-benzoin + NADP(+) = benzil + NADPH + H(+). Functionally, catalyzes the final one or two reductions in tetra-hydrobiopterin biosynthesis to form 5,6,7,8-tetrahydrobiopterin. The enzyme also catalyzes the reduction of benzil to (S)-benzoin. The sequence is that of Sepiapterin reductase (SPR) from Meriones unguiculatus (Mongolian jird).